The primary structure comprises 452 residues: Pup--protein ligase (452 aa).

Position 9 (Glu9) interacts with Mg(2+). Arg53 contributes to the ATP binding site. Tyr55 is a binding site for Mg(2+). Asp57 (proton acceptor) is an active-site residue. Glu63 is a binding site for Mg(2+). Thr66 and Trp419 together coordinate ATP.

This sequence belongs to the Pup ligase/Pup deamidase family. Pup-conjugating enzyme subfamily.

The catalysed reaction is ATP + [prokaryotic ubiquitin-like protein]-L-glutamate + [protein]-L-lysine = ADP + phosphate + N(6)-([prokaryotic ubiquitin-like protein]-gamma-L-glutamyl)-[protein]-L-lysine.. It functions in the pathway protein degradation; proteasomal Pup-dependent pathway. The protein operates within protein modification; protein pupylation. Functionally, catalyzes the covalent attachment of the prokaryotic ubiquitin-like protein modifier Pup to the proteasomal substrate proteins, thereby targeting them for proteasomal degradation. This tagging system is termed pupylation. The ligation reaction involves the side-chain carboxylate of the C-terminal glutamate of Pup and the side-chain amino group of a substrate lysine. This chain is Pup--protein ligase, found in Mycolicibacterium vanbaalenii (strain DSM 7251 / JCM 13017 / BCRC 16820 / KCTC 9966 / NRRL B-24157 / PYR-1) (Mycobacterium vanbaalenii).